Reading from the N-terminus, the 288-residue chain is Small ribosomal subunit protein uS2 (288 aa).

The protein belongs to the universal ribosomal protein uS2 family. In terms of assembly, component of the small ribosomal subunit. Mature ribosomes consist of a small (40S) and a large (60S) subunit. The 40S subunit contains about 33 different proteins and 1 molecule of RNA (18S). The 60S subunit contains about 49 different proteins and 3 molecules of RNA (28S, 5.8S and 5S). Interacts with ribosomal protein S21.

It localises to the cytoplasm. Its function is as follows. Required for the assembly and/or stability of the 40S ribosomal subunit. Required for the processing of the 20S rRNA-precursor to mature 18S rRNA in a late step of the maturation of 40S ribosomal subunits. The chain is Small ribosomal subunit protein uS2 from Aedes aegypti (Yellowfever mosquito).